A 405-amino-acid chain; its full sequence is Arginine deiminase (405 aa).

Cysteine 395 serves as the catalytic Amidino-cysteine intermediate.

The protein belongs to the arginine deiminase family.

Its subcellular location is the cytoplasm. It catalyses the reaction L-arginine + H2O = L-citrulline + NH4(+). It participates in amino-acid degradation; L-arginine degradation via ADI pathway; carbamoyl phosphate from L-arginine: step 1/2. In Rhodococcus jostii (strain RHA1), this protein is Arginine deiminase.